We begin with the raw amino-acid sequence, 78 residues long: Large ribosomal subunit protein bL28 (78 aa).

It belongs to the bacterial ribosomal protein bL28 family.

In Bordetella avium (strain 197N), this protein is Large ribosomal subunit protein bL28.